The primary structure comprises 199 residues: Oligoribonuclease (199 aa).

One can recognise an Exonuclease domain in the interval 5 to 170 (LVWIDCEMTG…ADIRESIREL (166 aa)). Residue Tyr-127 is part of the active site.

Belongs to the oligoribonuclease family.

Its subcellular location is the cytoplasm. Its function is as follows. 3'-to-5' exoribonuclease specific for small oligoribonucleotides. This is Oligoribonuclease from Rhodococcus jostii (strain RHA1).